The following is a 438-amino-acid chain: Serine--tRNA ligase (438 aa).

L-serine is bound at residue 243-245 (TAE). 274-276 (RSE) serves as a coordination point for ATP. Residue Glu-297 participates in L-serine binding. An ATP-binding site is contributed by 361–364 (EISS). Ser-396 serves as a coordination point for L-serine.

It belongs to the class-II aminoacyl-tRNA synthetase family. Type-1 seryl-tRNA synthetase subfamily. In terms of assembly, homodimer. The tRNA molecule binds across the dimer.

The protein localises to the cytoplasm. It catalyses the reaction tRNA(Ser) + L-serine + ATP = L-seryl-tRNA(Ser) + AMP + diphosphate + H(+). The enzyme catalyses tRNA(Sec) + L-serine + ATP = L-seryl-tRNA(Sec) + AMP + diphosphate + H(+). Its pathway is aminoacyl-tRNA biosynthesis; selenocysteinyl-tRNA(Sec) biosynthesis; L-seryl-tRNA(Sec) from L-serine and tRNA(Sec): step 1/1. Catalyzes the attachment of serine to tRNA(Ser). Is also able to aminoacylate tRNA(Sec) with serine, to form the misacylated tRNA L-seryl-tRNA(Sec), which will be further converted into selenocysteinyl-tRNA(Sec). This Ralstonia pickettii (strain 12J) protein is Serine--tRNA ligase.